The primary structure comprises 459 residues: MKIGFWTWKSIKLSIAIPLMCSHVSSALRAELGLDEEAFGTAAAKKYETLLEKKWTSIVRLQKKIMDLESRNAALQTELANLTPTALSKRHQDPASWLPRSVRHSLESHRDTINSIAFHPIYSSLASCSDDCTIKIWDWELGELERTVKGHTRAVLDVDYGGPRSSILLASCSSDLSIKLWDPADEYKNIRTLLGHDHSVGAVRFIPSGASGTLSSGNLLVSASRDGTLRIWDVVTGYCVKTLRGHTAWVRDVCPSFDGRFLLSAGDDMTTRLWNISGSNSDHKLTMLGHEHVIECCALAPFASYQYLAALTGLKAPPASSAAEFMATGSRDKTIKLWDAHGRCLGTLIGHDNWVRALAFHPGGKYLLSVSDDKTLRCWDLSQGGKCVKTLKDAHERFITCLRWAPGIFKNVPGVSTRDANGESNGVLNTGLKGDTPDVQVRCVIATGGVDKKLQVFAD.

Residues threonine 56–threonine 83 adopt a coiled-coil conformation. WD repeat units lie at residues serine 108–lysine 149, histidine 151–arginine 191, glycine 195–arginine 244, histidine 246–lysine 284, glutamine 306–leucine 348, glycine 350–lysine 389, alanine 394–aspartate 438, and glutamine 440–aspartate 459.

Belongs to the WD repeat LIS1/nudF family. As to quaternary structure, self-associates. Interacts with NDL1 and dynein.

It is found in the cytoplasm. The protein resides in the cytoskeleton. Its subcellular location is the spindle pole. Positively regulates the activity of the minus-end directed microtubule motor protein dynein. May enhance dynein-mediated microtubule sliding by targeting dynein to the microtubule plus end. Required for nuclear migration during vegetative growth as well as development. Required for retrograde early endosome (EE) transport from the hyphal tip. Required for localization of dynein to the mitotic spindle poles. Recruits additional proteins to the dynein complex at SPBs. The sequence is that of Nuclear distribution protein PAC1-2 from Uncinocarpus reesii (strain UAMH 1704).